A 1049-amino-acid polypeptide reads, in one-letter code: DEAD-box ATP-dependent RNA helicase 42 (1049 aa).

2 disordered regions span residues 1–279 (MGSS…DEID) and 299–358 (MPAA…DDEE). Over residues 64–106 (KERDREERKAREREEREKEKERERARRREERDREERSRRREAA) the composition is skewed to basic and acidic residues. The segment covering 118-131 (RKRRRRSSHHHHHH) has biased composition (basic residues). Composition is skewed to basic and acidic residues over residues 161–170 (KKEEEQKQLD) and 181–199 (KEWQEMKRREEETKRREQE). Over residues 201-214 (AGVGTSAAAAAAPA) the composition is skewed to low complexity. Residues 229-239 (DGEESDEEGNQ) are compositionally biased toward acidic residues. Residues 262-272 (NGGDNANGANA) show a composition bias toward low complexity. The segment covering 304–313 (VDDKNDKSAK) has biased composition (basic and acidic residues). Residues 335–358 (EDSDSDYADDEDDEGGSEDEDDEE) show a composition bias toward acidic residues. The short motif at 424 to 452 (KTWVQSGLTSKLLDTIKKLGFEKPMSIQA) is the Q motif element. A Helicase ATP-binding domain is found at 455-633 (LPIIMSGRDC…RKVLTKPVEI (179 aa)). 468 to 475 (AKTGSGKT) is an ATP binding site. The DEAD box signature appears at 581-584 (DEAD). Residues 644–805 (DITQLVEVRP…AVPEDLKGLA (162 aa)) form the Helicase C-terminal domain. The tract at residues 816–868 (TEQAHGTGYGGSGFKFNEEEDEARKSAKKAQAREYGYEEDKSDSDSDEEGGVR) is disordered. Positions 855 to 864 (DKSDSDSDEE) are enriched in acidic residues. Positions 1012-1037 (TELSVKKAKAELKRVLEDCANHALNL) form a coiled coil.

Belongs to the DEAD box helicase family. DDX46/PRP5 subfamily.

It carries out the reaction ATP + H2O = ADP + phosphate + H(+). This Oryza sativa subsp. japonica (Rice) protein is DEAD-box ATP-dependent RNA helicase 42.